We begin with the raw amino-acid sequence, 350 residues long: E3 ubiquitin-protein ligase TRIM63 (350 aa).

The segment at 23–79 (CPICLEMFTKPVVILPCQHNLCRKCANDIFQAANPYWTNRGGSVSMSGGRFRCPSCR) adopts an RING-type zinc-finger fold. Positions 74 to 218 (RCPSCRHEVI…LSQKFDTLYA (145 aa)) are interaction with TTN. The B box-type zinc finger occupies 117-159 (GSHPMCKEHEDEKINIYCLTCEVPTCSLCKVFGAHQACEVAPL). Positions 122, 125, 145, and 151 each coordinate Zn(2+). Residues 207-269 (EELSQKFDTL…VETAIQSLDE (63 aa)) are a coiled coil. Positions 267-325 (LDEPGGATFLSSAKQLIKSNVEASKGCQLGKTEQGFENMDYFTLDLEHIAEALRAIDFG) constitute a COS domain. Residues 325–344 (GTDEEEEEFTEEEADEEEGV) are compositionally biased toward acidic residues. The interval 325–350 (GTDEEEEEFTEEEADEEEGVTTEGHQ) is disordered.

In terms of assembly, homodimer. Homooligomer and heterooligomer. Interacts with SUMO2, titin/TTN and GMEB1. Interacts with TRIM54 and probably with TRIM55. Interacts with TNNI3. Forms a ternary complex with RACK1 and PRKCE. Interacts with CKM.

Its subcellular location is the cytoplasm. The protein localises to the nucleus. It is found in the myofibril. It localises to the sarcomere. The protein resides in the m line. Its subcellular location is the z line. It carries out the reaction S-ubiquitinyl-[E2 ubiquitin-conjugating enzyme]-L-cysteine + [acceptor protein]-L-lysine = [E2 ubiquitin-conjugating enzyme]-L-cysteine + N(6)-ubiquitinyl-[acceptor protein]-L-lysine.. The protein operates within protein modification; protein ubiquitination. Its function is as follows. E3 ubiquitin ligase. Mediates the ubiquitination and subsequent proteasomal degradation of CKM, GMEB1 and HIBADH. Regulates the proteasomal degradation of muscle proteins under amino acid starvation, where muscle protein is catabolized to provide other organs with amino acids. Inhibits de novo skeletal muscle protein synthesis under amino acid starvation. Regulates proteasomal degradation of cardiac troponin I/TNNI3 and probably of other sarcomeric-associated proteins. May play a role in striated muscle atrophy and hypertrophy by regulating an anti-hypertrophic PKC-mediated signaling pathway. May regulate the organization of myofibrils through TTN in muscle cells. This chain is E3 ubiquitin-protein ligase TRIM63 (Trim63), found in Mus musculus (Mouse).